A 233-amino-acid chain; its full sequence is Lipoprotein-releasing system ATP-binding protein LolD (233 aa).

The region spanning 6–233 is the ABC transporter domain; sequence LQCDNLCKRY…TAELSLMGAE (228 aa). 42–49 contacts ATP; the sequence is GSSGSGKS.

This sequence belongs to the ABC transporter superfamily. Lipoprotein translocase (TC 3.A.1.125) family. In terms of assembly, the complex is composed of two ATP-binding proteins (LolD) and two transmembrane proteins (LolC and LolE).

It is found in the cell inner membrane. Part of the ABC transporter complex LolCDE involved in the translocation of mature outer membrane-directed lipoproteins, from the inner membrane to the periplasmic chaperone, LolA. Responsible for the formation of the LolA-lipoprotein complex in an ATP-dependent manner. The protein is Lipoprotein-releasing system ATP-binding protein LolD of Shigella dysenteriae serotype 1 (strain Sd197).